We begin with the raw amino-acid sequence, 414 residues long: F-box protein At3g26010 (414 aa).

In terms of domain architecture, F-box spans 5–52 (NRTIHLTDAIWTEILARLPLRIIARFKSVSKTWKSTIESVYFRRLFVS).

The protein is F-box protein At3g26010 of Arabidopsis thaliana (Mouse-ear cress).